The following is a 128-amino-acid chain: Aspartate 1-decarboxylase (128 aa).

The active-site Schiff-base intermediate with substrate; via pyruvic acid is the S25. S25 bears the Pyruvic acid (Ser) mark. T57 provides a ligand contact to substrate. The active-site Proton donor is the Y58. A substrate-binding site is contributed by 73–75; the sequence is GSA.

Belongs to the PanD family. As to quaternary structure, heterooctamer of four alpha and four beta subunits. The cofactor is pyruvate. Is synthesized initially as an inactive proenzyme, which is activated by self-cleavage at a specific serine bond to produce a beta-subunit with a hydroxyl group at its C-terminus and an alpha-subunit with a pyruvoyl group at its N-terminus.

It is found in the cytoplasm. The catalysed reaction is L-aspartate + H(+) = beta-alanine + CO2. It functions in the pathway cofactor biosynthesis; (R)-pantothenate biosynthesis; beta-alanine from L-aspartate: step 1/1. Functionally, catalyzes the pyruvoyl-dependent decarboxylation of aspartate to produce beta-alanine. This Burkholderia ambifaria (strain ATCC BAA-244 / DSM 16087 / CCUG 44356 / LMG 19182 / AMMD) (Burkholderia cepacia (strain AMMD)) protein is Aspartate 1-decarboxylase.